A 137-amino-acid polypeptide reads, in one-letter code: Endoribonuclease YbeY (137 aa).

Residues His105, His109, and Asp115 each coordinate Zn(2+).

It belongs to the endoribonuclease YbeY family. It depends on Zn(2+) as a cofactor.

It is found in the cytoplasm. In terms of biological role, single strand-specific metallo-endoribonuclease involved in late-stage 70S ribosome quality control and in maturation of the 3' terminus of the 16S rRNA. The chain is Endoribonuclease YbeY from Chlorobium luteolum (strain DSM 273 / BCRC 81028 / 2530) (Pelodictyon luteolum).